Here is a 277-residue protein sequence, read N- to C-terminus: Putative hydro-lyase BPP3031 (277 aa).

The protein belongs to the D-glutamate cyclase family.

This is Putative hydro-lyase BPP3031 from Bordetella parapertussis (strain 12822 / ATCC BAA-587 / NCTC 13253).